A 239-amino-acid polypeptide reads, in one-letter code: Serine protease SplC (239 aa).

Residues 1–36 form the signal peptide; it reads MNKNIVIKSMAALAILTSVTGINAAVVEETQQIANA. Catalysis depends on charge relay system residues H75, D113, and S193.

The protein belongs to the peptidase S1B family.

It is found in the secreted. The chain is Serine protease SplC (splC) from Staphylococcus aureus (strain USA300 / TCH1516).